We begin with the raw amino-acid sequence, 463 residues long: Cysteine--tRNA ligase (463 aa).

Position 29 (C29) interacts with Zn(2+). Positions 31–41 (PTVYNYAHIGN) match the 'HIGH' region motif. Residues C211, H236, and E240 each coordinate Zn(2+). Positions 269–273 (KMSKS) match the 'KMSKS' region motif. K272 contacts ATP.

It belongs to the class-I aminoacyl-tRNA synthetase family. As to quaternary structure, monomer. Requires Zn(2+) as cofactor.

The protein localises to the cytoplasm. The enzyme catalyses tRNA(Cys) + L-cysteine + ATP = L-cysteinyl-tRNA(Cys) + AMP + diphosphate. The protein is Cysteine--tRNA ligase of Caulobacter vibrioides (strain ATCC 19089 / CIP 103742 / CB 15) (Caulobacter crescentus).